A 424-amino-acid chain; its full sequence is Hemagglutinin-esterase (424 aa).

Residues 1–16 (MFLLPRFVLVSCIIGS) form the signal peptide. Positions 7–127 (FVLVSCIIGS…SNDIWMQNKG (121 aa)) are esterase domain 1. The Virion surface portion of the chain corresponds to 17–392 (LGFENPPTNV…PICVYDPLPL (376 aa)). S40 (nucleophile) is an active-site residue. Residues C44 and C65 are joined by a disulfide bond. N-linked (GlcNAc...) asparagine; by host glycosylation is found at N54, N89, N153, N236, and N301. 3 disulfides stabilise this stretch: C113-C162, C197-C276, and C205-C249. Residues 128–266 (LFYTQVYKNM…GNYLAISNEL (139 aa)) are receptor binding. The segment at 267 to 379 (LLTVPTKAIC…RCPTAADINT (113 aa)) is esterase domain 2. A disulfide bond links C307 and C312. N-linked (GlcNAc...) asparagine; by host glycosylation is present at N316. Residues D326 and H329 each act as charge relay system in the active site. A disulfide bond links C347 and C371. The N-linked (GlcNAc...) asparagine; by host glycan is linked to N358. Residues 393–413 (ILLGILLGVAVIIIVVLLLYF) traverse the membrane as a helical segment. Over 414–424 (MVDNGTRLHDA) the chain is Intravirion. Residue N417 is glycosylated (N-linked (GlcNAc...) asparagine; by host).

The protein belongs to the influenza type C/coronaviruses hemagglutinin-esterase family. In terms of assembly, homodimer; disulfide-linked. Forms a complex with the M protein in the pre-Golgi. Associates then with S-M complex to form a ternary complex S-M-HE. N-glycosylated in the host RER.

The protein resides in the virion membrane. It is found in the host cell membrane. The catalysed reaction is N-acetyl-9-O-acetylneuraminate + H2O = N-acetylneuraminate + acetate + H(+). It catalyses the reaction N-acetyl-4-O-acetylneuraminate + H2O = N-acetylneuraminate + acetate + H(+). Structural protein that makes short spikes at the surface of the virus. Contains receptor binding and receptor-destroying activities. Mediates de-O-acetylation of N-acetyl-4-O-acetylneuraminic acid, which is probably the receptor determinant recognized by the virus on the surface of erythrocytes and susceptible cells. This receptor-destroying activity is important for virus release as it probably helps preventing self-aggregation and ensures the efficient spread of the progeny virus from cell to cell. May serve as a secondary viral attachment protein for initiating infection, the spike protein being the major one. May become a target for both the humoral and the cellular branches of the immune system. The sequence is that of Hemagglutinin-esterase from Bovine coronavirus (strain G95) (BCoV).